The following is a 139-amino-acid chain: Putative truncated protein trichome birefringence-like 46 (139 aa).

The protein belongs to the PC-esterase family. TBL subfamily.

This chain is Putative truncated protein trichome birefringence-like 46 (TBL46), found in Arabidopsis thaliana (Mouse-ear cress).